The chain runs to 575 residues: Transcription factor collier (575 aa).

Residues 79–82 form an interaction with DNA region; the sequence is RKSN. The C5-type zinc finger occupies 167–186; the sequence is CRVLLTHEVMCSRCCDKKSC. Interaction with DNA regions lie at residues 213 to 220 and 252 to 255; these read NCLKNAGN and NNSK. Residues 255-278 are disordered; sequence KHGRRAKRLDTTEGTGNTSLSISG. Positions 266 to 276 are enriched in polar residues; sequence TEGTGNTSLSI. The IPT/TIG domain occupies 299 to 382; sequence PCIKAISPSE…KGSPGRFVYV (84 aa). 2 disordered regions span residues 456 to 492 and 546 to 575; these read GQWT…GSYG and AATA…AAAV. Over residues 479-492 the composition is skewed to low complexity; the sequence is SSASTPHSSGGSYG. The span at 546–557 shows a compositional bias: basic residues; sequence AATAHPHHHYPH. Over residues 561-575 the composition is skewed to low complexity; it reads PWHNPAVSAATAAAV.

Belongs to the COE family. Its expression at the blastoderm stage is restricted to a single stripe of cells corresponding to part of the intercalary and mandibular segment primordia, possibly parasegment O.

Its subcellular location is the nucleus. Functionally, may act as a 'second-level regulator' of head patterning. Required for establishment of the PS(-1)/PS0 parasegmental border and formation of the intercalary segment. Required for expression of the segment polarity genes hedgehog, engrailed and wingless, and the segment-identity genes CAP and collar in the intercalary segment. Required at the onset of the gastrulation for the correct formation of the mandibular segment. This Drosophila melanogaster (Fruit fly) protein is Transcription factor collier (kn).